Reading from the N-terminus, the 414-residue chain is 5-aminolevulinate synthase (414 aa).

Residues arginine 22, serine 133, and lysine 152 each contribute to the substrate site. 3 residues coordinate pyridoxal 5'-phosphate: serine 185, histidine 213, and threonine 241. Lysine 244 is a catalytic residue. Residue lysine 244 is modified to N6-(pyridoxal phosphate)lysine. Residues threonine 273 and threonine 274 each coordinate pyridoxal 5'-phosphate. Position 359 (threonine 359) interacts with substrate.

It belongs to the class-II pyridoxal-phosphate-dependent aminotransferase family. As to quaternary structure, homodimer. Requires pyridoxal 5'-phosphate as cofactor.

The enzyme catalyses succinyl-CoA + glycine + H(+) = 5-aminolevulinate + CO2 + CoA. It participates in porphyrin-containing compound metabolism; protoporphyrin-IX biosynthesis; 5-aminolevulinate from glycine: step 1/1. The protein is 5-aminolevulinate synthase (hemA) of Rickettsia prowazekii (strain Madrid E).